Reading from the N-terminus, the 374-residue chain is Peptide chain release factor 2 (374 aa).

Residue Gln-252 is modified to N5-methylglutamine.

The protein belongs to the prokaryotic/mitochondrial release factor family. Post-translationally, methylated by PrmC. Methylation increases the termination efficiency of RF2.

Its subcellular location is the cytoplasm. Its function is as follows. Peptide chain release factor 2 directs the termination of translation in response to the peptide chain termination codons UGA and UAA. The protein is Peptide chain release factor 2 of Xanthomonas euvesicatoria pv. vesicatoria (strain 85-10) (Xanthomonas campestris pv. vesicatoria).